The chain runs to 420 residues: Gamma-glutamyl phosphate reductase (420 aa).

It belongs to the gamma-glutamyl phosphate reductase family.

The protein resides in the cytoplasm. It carries out the reaction L-glutamate 5-semialdehyde + phosphate + NADP(+) = L-glutamyl 5-phosphate + NADPH + H(+). Its pathway is amino-acid biosynthesis; L-proline biosynthesis; L-glutamate 5-semialdehyde from L-glutamate: step 2/2. Functionally, catalyzes the NADPH-dependent reduction of L-glutamate 5-phosphate into L-glutamate 5-semialdehyde and phosphate. The product spontaneously undergoes cyclization to form 1-pyrroline-5-carboxylate. The polypeptide is Gamma-glutamyl phosphate reductase (Alkalilimnicola ehrlichii (strain ATCC BAA-1101 / DSM 17681 / MLHE-1)).